Consider the following 512-residue polypeptide: CaM kinase-like vesicle-associated protein (512 aa).

Positions 24–286 constitute a Protein kinase domain; sequence YDLGQVIKTE…AEEAISHEWI (263 aa). The tract at residues 328–347 is disordered; sequence APEQSGTAATQSASDAATPG. Residues 332–347 are compositionally biased toward low complexity; the sequence is SGTAATQSASDAATPG. S392 is modified (phosphoserine). A disordered region spans residues 393 to 512; sequence ADRSATPATD…AQESQRVETS (120 aa). Positions 398–439 are enriched in polar residues; the sequence is TPATDGSATPATDGSVTPATDGSITPATDGSVTPATDRSATP. A Phosphothreonine modification is found at T446. Residues 449-460 show a composition bias toward polar residues; it reads TEESTVPATQSS. Residues 461-478 are compositionally biased toward low complexity; the sequence is ALPAAKAAATPEPAVAQP. T470 is modified (phosphothreonine).

This sequence belongs to the protein kinase superfamily. CAMK Ser/Thr protein kinase family. Interacts with calmodulin, in the presence of calcium. The cofactor is Ca(2+).

It localises to the cell membrane. The protein resides in the cytoplasmic vesicle membrane. In terms of biological role, does not appear to have detectable kinase activity. The sequence is that of CaM kinase-like vesicle-associated protein (Camkv) from Mus musculus (Mouse).